The primary structure comprises 1035 residues: Putative protein FAM47C (1035 aa).

Disordered regions lie at residues 1–21 (MGDQ…TPWY) and 159–797 (LEDA…RRVS). Positions 159-173 (LEDAGSCEGQEKTTD) are enriched in basic and acidic residues. Over residues 380 to 392 (PEPPKTRVPPLRP) the composition is skewed to pro residues. The segment covering 478 to 490 (PPEKDVSHLRPEP) has biased composition (basic and acidic residues). Residues 533 to 544 (SLHQAPPESSVS) are compositionally biased toward polar residues. 3 stretches are compositionally biased toward basic and acidic residues: residues 611–622 (PETRVSHLRPEP), 683–694 (PETRVSHLRPEP), and 753–766 (EPLE…RPEP).

The protein belongs to the FAM47 family.

This is Putative protein FAM47C (FAM47C) from Homo sapiens (Human).